The chain runs to 843 residues: Protein P (843 aa).

The tract at residues 1-177 (MPLSYQHFRK…FCGSPYSWEQ (177 aa)) is terminal protein domain (TP). Residues 178–346 (DLQHGRLVFQ…YCLSHIVNLI (169 aa)) form a spacer region. A disordered region spans residues 219–269 (RKSRLGPQPAQGQLAGRQQGGSGSIRARVHPSPWGTVGVEPSGSGPTHNCA). The segment covering 223–235 (LGPQPAQGQLAGR) has biased composition (low complexity). Positions 347 to 690 (EDWGPCTEHG…YLNLYPVARQ (344 aa)) are polymerase/reverse transcriptase domain (RT). The 244-residue stretch at 357–600 (EHRIRTPRTP…YSLNFMGYVI (244 aa)) folds into the Reverse transcriptase domain. Mg(2+) contacts are provided by D429, D551, and D552.

Belongs to the hepadnaviridae P protein family.

The catalysed reaction is DNA(n) + a 2'-deoxyribonucleoside 5'-triphosphate = DNA(n+1) + diphosphate. It catalyses the reaction Endonucleolytic cleavage to 5'-phosphomonoester.. With respect to regulation, activated by host HSP70 and HSP40 in vitro to be able to bind the epsilon loop of the pgRNA. Because deletion of the RNase H region renders the protein partly chaperone-independent, the chaperones may be needed indirectly to relieve occlusion of the RNA-binding site by this domain. Inhibited by several reverse-transcriptase inhibitors: Lamivudine, Adefovir and Entecavir. Its function is as follows. Multifunctional enzyme that converts the viral RNA genome into dsDNA in viral cytoplasmic capsids. This enzyme displays a DNA polymerase activity that can copy either DNA or RNA templates, and a ribonuclease H (RNase H) activity that cleaves the RNA strand of RNA-DNA heteroduplexes in a partially processive 3'- to 5'-endonucleasic mode. Neo-synthesized pregenomic RNA (pgRNA) are encapsidated together with the P protein, and reverse-transcribed inside the nucleocapsid. Initiation of reverse-transcription occurs first by binding the epsilon loop on the pgRNA genome, and is initiated by protein priming, thereby the 5'-end of (-)DNA is covalently linked to P protein. Partial (+)DNA is synthesized from the (-)DNA template and generates the relaxed circular DNA (RC-DNA) genome. After budding and infection, the RC-DNA migrates in the nucleus, and is converted into a plasmid-like covalently closed circular DNA (cccDNA). The activity of P protein does not seem to be necessary for cccDNA generation, and is presumably released from (+)DNA by host nuclear DNA repair machinery. The chain is Protein P from Hepatitis B virus genotype B2 subtype adw (isolate China/patient4/1996) (HBV-B).